The following is a 358-amino-acid chain: uncharacterized protein (358 aa).

The segment at 1–47 (MGNVAGETRANVIPLHTNRSRVAARRRAGQRAESRQHPSLLSDPNDR) is disordered. Positions 18-29 (NRSRVAARRRAG) are enriched in basic residues.

To M.leprae ML2427.

This is an uncharacterized protein from Mycobacterium tuberculosis (strain CDC 1551 / Oshkosh).